The following is a 517-amino-acid chain: Probable cytosol aminopeptidase (517 aa).

Mn(2+)-binding residues include Lys279 and Asp284. The active site involves Lys291. Asp302, Asp361, and Glu363 together coordinate Mn(2+). Arg365 is a catalytic residue.

It belongs to the peptidase M17 family. The cofactor is Mn(2+).

The protein localises to the cytoplasm. The catalysed reaction is Release of an N-terminal amino acid, Xaa-|-Yaa-, in which Xaa is preferably Leu, but may be other amino acids including Pro although not Arg or Lys, and Yaa may be Pro. Amino acid amides and methyl esters are also readily hydrolyzed, but rates on arylamides are exceedingly low.. The enzyme catalyses Release of an N-terminal amino acid, preferentially leucine, but not glutamic or aspartic acids.. In terms of biological role, presumably involved in the processing and regular turnover of intracellular proteins. Catalyzes the removal of unsubstituted N-terminal amino acids from various peptides. The protein is Probable cytosol aminopeptidase of Streptomyces coelicolor (strain ATCC BAA-471 / A3(2) / M145).